Here is a 229-residue protein sequence, read N- to C-terminus: Cytochrome c oxidase subunit 2 (229 aa).

The Mitochondrial intermembrane portion of the chain corresponds to 1 to 26 (MATWAQLNFQDAASPMMEQLHYFHDH). The helical transmembrane segment at 27-48 (TMMVLVIITIMVAYIMGTMFFN) threads the bilayer. The Mitochondrial matrix portion of the chain corresponds to 49–62 (KDVNRYLLDGQKIE). A helical membrane pass occupies residues 63–82 (TEWTIVPVFVLVIIAMPSLR). Residues 83 to 229 (LLYLLDEVNE…INWIQNMSEA (147 aa)) lie on the Mitochondrial intermembrane side of the membrane. 6 residues coordinate Cu cation: His161, Cys196, Glu198, Cys200, His204, and Met207. Glu198 is a Mg(2+) binding site.

It belongs to the cytochrome c oxidase subunit 2 family. Component of the cytochrome c oxidase (complex IV, CIV), a multisubunit enzyme composed of a catalytic core of 3 subunits and several supernumerary subunits. The complex exists as a monomer or a dimer and forms supercomplexes (SCs) in the inner mitochondrial membrane with ubiquinol-cytochrome c oxidoreductase (cytochrome b-c1 complex, complex III, CIII). Cu cation serves as cofactor.

The protein localises to the mitochondrion inner membrane. The catalysed reaction is 4 Fe(II)-[cytochrome c] + O2 + 8 H(+)(in) = 4 Fe(III)-[cytochrome c] + 2 H2O + 4 H(+)(out). Functionally, component of the cytochrome c oxidase, the last enzyme in the mitochondrial electron transport chain which drives oxidative phosphorylation. The respiratory chain contains 3 multisubunit complexes succinate dehydrogenase (complex II, CII), ubiquinol-cytochrome c oxidoreductase (cytochrome b-c1 complex, complex III, CIII) and cytochrome c oxidase (complex IV, CIV), that cooperate to transfer electrons derived from NADH and succinate to molecular oxygen, creating an electrochemical gradient over the inner membrane that drives transmembrane transport and the ATP synthase. Cytochrome c oxidase is the component of the respiratory chain that catalyzes the reduction of oxygen to water. Electrons originating from reduced cytochrome c in the intermembrane space (IMS) are transferred via the dinuclear copper A center (CU(A)) of subunit 2 and heme A of subunit 1 to the active site in subunit 1, a binuclear center (BNC) formed by heme A3 and copper B (CU(B)). The BNC reduces molecular oxygen to 2 water molecules using 4 electrons from cytochrome c in the IMS and 4 protons from the mitochondrial matrix. The polypeptide is Cytochrome c oxidase subunit 2 (COII) (Sympetrum striolatum (Common darter dragonfly)).